The chain runs to 178 residues: Large ribosomal subunit protein uL5 (178 aa).

The protein belongs to the universal ribosomal protein uL5 family. Part of the 50S ribosomal subunit; contacts the 5S rRNA and probably tRNA. Forms a bridge to the 30S subunit in the 70S ribosome.

Its function is as follows. This is one of the proteins that bind and probably mediate the attachment of the 5S RNA into the large ribosomal subunit, where it forms part of the central protuberance. In the 70S ribosome it contacts protein S13 of the 30S subunit (bridge B1b), connecting the 2 subunits; this bridge is implicated in subunit movement. May contact the P site tRNA; the 5S rRNA and some of its associated proteins might help stabilize positioning of ribosome-bound tRNAs. This chain is Large ribosomal subunit protein uL5, found in Sulfolobus acidocaldarius (strain ATCC 33909 / DSM 639 / JCM 8929 / NBRC 15157 / NCIMB 11770).